The primary structure comprises 260 residues: Snake venom serine protease pallabin-2 (260 aa).

Positions 1 to 18 are cleaved as a signal peptide; the sequence is MVLIKVLANLLILQLSYA. Positions 19–24 are excised as a propeptide; the sequence is QKSSEL. Positions 25-251 constitute a Peptidase S1 domain; that stretch reads IIGGDECNIN…HLDWIENIIA (227 aa). Cystine bridges form between C31–C163, C50–C66, C98–C258, C142–C212, C174–C191, and C202–C227. H65 serves as the catalytic Charge relay system. A glycan (N-linked (GlcNAc...) asparagine) is linked at N103. The Charge relay system role is filled by D110. The Charge relay system role is filled by S206.

This sequence belongs to the peptidase S1 family. Snake venom subfamily. Monomer. Expressed by the venom gland.

The protein resides in the secreted. Its function is as follows. Snake venom serine protease that may act in the hemostasis system of the prey. The protein is Snake venom serine protease pallabin-2 (JZTHR7) of Gloydius halys (Chinese water mocassin).